The sequence spans 321 residues: Acetyl-coenzyme A carboxylase carboxyl transferase subunit alpha (321 aa).

In terms of domain architecture, CoA carboxyltransferase C-terminal spans 39–293 (RLQQKSQNLA…RRALGDALRQ (255 aa)).

It belongs to the AccA family. As to quaternary structure, acetyl-CoA carboxylase is a heterohexamer composed of biotin carboxyl carrier protein (AccB), biotin carboxylase (AccC) and two subunits each of ACCase subunit alpha (AccA) and ACCase subunit beta (AccD).

It localises to the cytoplasm. It carries out the reaction N(6)-carboxybiotinyl-L-lysyl-[protein] + acetyl-CoA = N(6)-biotinyl-L-lysyl-[protein] + malonyl-CoA. The protein operates within lipid metabolism; malonyl-CoA biosynthesis; malonyl-CoA from acetyl-CoA: step 1/1. Component of the acetyl coenzyme A carboxylase (ACC) complex. First, biotin carboxylase catalyzes the carboxylation of biotin on its carrier protein (BCCP) and then the CO(2) group is transferred by the carboxyltransferase to acetyl-CoA to form malonyl-CoA. In Bordetella bronchiseptica (strain ATCC BAA-588 / NCTC 13252 / RB50) (Alcaligenes bronchisepticus), this protein is Acetyl-coenzyme A carboxylase carboxyl transferase subunit alpha.